Reading from the N-terminus, the 334-residue chain is MALPDYSMRQLLEAGVHFGHQSHRWNPKMAPYIFGVRNNIHIIDLSQTVPALHRALQAVSDTVAQGGRVLFVGTKRQAQEQVADAARRSAQYYVNSRWLGGMLTNWKTISNSIARLKKLEEMLSGPEQGSGYTKKERLTLSREKDKLDKALGGIRDMGGLPDLLFVIDTNKEDIAVKEAQRLGIPVAAILDTNCDPDGIAFPVPGNDDAGRAIQLYCELVARAAIDGIGRGHSDLGIDVGAEEAPLVEDLPVETGAWSSFEPLSGPRGVADDLKKLTGVSPEIEQKLNDLGVFHFGQVAGLDAIDAHRIGEEVGLPGRVDGWVAQAKELSAEVE.

Belongs to the universal ribosomal protein uS2 family.

In Xanthobacter autotrophicus (strain ATCC BAA-1158 / Py2), this protein is Small ribosomal subunit protein uS2.